Reading from the N-terminus, the 492-residue chain is Cobyric acid synthase (492 aa).

The GATase cobBQ-type domain occupies His-259–Ala-453. Catalysis depends on Cys-340, which acts as the Nucleophile. The active site involves His-445.

Belongs to the CobB/CobQ family. CobQ subfamily.

The protein operates within cofactor biosynthesis; adenosylcobalamin biosynthesis. Catalyzes amidations at positions B, D, E, and G on adenosylcobyrinic A,C-diamide. NH(2) groups are provided by glutamine, and one molecule of ATP is hydrogenolyzed for each amidation. This is Cobyric acid synthase from Paracidovorax citrulli (strain AAC00-1) (Acidovorax citrulli).